Here is a 188-residue protein sequence, read N- to C-terminus: VQ motif-containing protein 18 (188 aa).

3 disordered regions span residues 1–20 (MEIT…VSMN), 58–92 (LTGK…HQPV), and 157–188 (GFIF…HNSS). The short motif at 51–60 (FRSLVQSLTG) is the VQ element. Positions 161–179 (NNNNNNNNNNNNNNNNNTN) are enriched in low complexity.

It localises to the nucleus. In terms of biological role, may function as positive regulator of plant growth. This is VQ motif-containing protein 18 from Arabidopsis thaliana (Mouse-ear cress).